The chain runs to 553 residues: MSFEKLADIIFGNVEHTTEYYVEKYPKRSLKEGARVTRYAPSPTGFQHIGGVFAALINERLASQSEGVFYLRIEDTDQKREVEGAIEDTIATMHNFGMDFSEGMTGEETSKGEYGPYRQSQRAEIYNTFAKDLLIKGLAYPDFCTPEELAQLRERQIANKITPGYYGEYAKFRNITEEEAIKRIENGEKYIIRLKSPGNPEKRVEFHDLIKGDISFPENNQDVVLIKGDGLPTYHFAHAIDDYLMRTTDVIRGEEWLSSLPIHVQLFEVLGFEAPRYAHIPTIMKQDGGSKRKLSKRKDAEAAVSYYKEVGFPVVTVIEYLLNIVNSTYEEWRAENPKADYHEFEVHLEKMGKSGALFDLVKLNDVSKDRIAAMKATDVYEYYTAWAKEFDAEMYKLVTENETMAKEIFNIDKEGPKPRKDFAKWDEVKDKIFYFFDELFYKESAEQIELPKGVTLEAAKEIVETYKKEFKFDVESQEAWFDDLKEIGIRLGYCANRKEFKANPDQYKGMISDVAGAVRAALTHRTNSPDIYTIMQIIGEENTRNRFDKFLNI.

Residues 41 to 51 (PSPTGFQHIGG) carry the 'HIGH' region motif. The 'KMSKS' region signature appears at 293 to 297 (KLSKR). K296 provides a ligand contact to ATP.

Belongs to the class-I aminoacyl-tRNA synthetase family. Glutamate--tRNA ligase type 1 subfamily. Monomer.

The protein localises to the cytoplasm. The catalysed reaction is tRNA(Glu) + L-glutamate + ATP = L-glutamyl-tRNA(Glu) + AMP + diphosphate. Its function is as follows. Catalyzes the attachment of glutamate to tRNA(Glu) in a two-step reaction: glutamate is first activated by ATP to form Glu-AMP and then transferred to the acceptor end of tRNA(Glu). The protein is Glutamate--tRNA ligase of Clostridium beijerinckii (strain ATCC 51743 / NCIMB 8052) (Clostridium acetobutylicum).